Here is a 191-residue protein sequence, read N- to C-terminus: Small ribosomal subunit protein uS5 (191 aa).

Positions 20–83 constitute an S5 DRBM domain; sequence FADRLVAINR…EQAKRQMIRV (64 aa). The tract at residues 158–191 is disordered; the sequence is TSPRMVAQRRGKKVSDILKKDGEPAEAAAEPAEA. Over residues 170–180 the composition is skewed to basic and acidic residues; the sequence is KVSDILKKDGE. A compositionally biased stretch (low complexity) spans 182 to 191; that stretch reads AEAAAEPAEA.

This sequence belongs to the universal ribosomal protein uS5 family. In terms of assembly, part of the 30S ribosomal subunit. Contacts proteins S4 and S8.

Functionally, with S4 and S12 plays an important role in translational accuracy. Located at the back of the 30S subunit body where it stabilizes the conformation of the head with respect to the body. This is Small ribosomal subunit protein uS5 from Dinoroseobacter shibae (strain DSM 16493 / NCIMB 14021 / DFL 12).